The following is a 450-amino-acid chain: Glucose-6-phosphate isomerase (450 aa).

Threonine 39 is modified (phosphothreonine). Glutamate 291 (proton donor) is an active-site residue. Active-site residues include histidine 312 and lysine 426.

Belongs to the GPI family.

Its subcellular location is the cytoplasm. It catalyses the reaction alpha-D-glucose 6-phosphate = beta-D-fructose 6-phosphate. Its pathway is carbohydrate biosynthesis; gluconeogenesis. The protein operates within carbohydrate degradation; glycolysis; D-glyceraldehyde 3-phosphate and glycerone phosphate from D-glucose: step 2/4. Functionally, catalyzes the reversible isomerization of glucose-6-phosphate to fructose-6-phosphate. In Bacillus mycoides (strain KBAB4) (Bacillus weihenstephanensis), this protein is Glucose-6-phosphate isomerase.